We begin with the raw amino-acid sequence, 98 residues long: Large ribosomal subunit protein uL23 (98 aa).

Belongs to the universal ribosomal protein uL23 family. As to quaternary structure, part of the 50S ribosomal subunit. Contacts protein L29, and trigger factor when it is bound to the ribosome.

Its function is as follows. One of the early assembly proteins it binds 23S rRNA. One of the proteins that surrounds the polypeptide exit tunnel on the outside of the ribosome. Forms the main docking site for trigger factor binding to the ribosome. This is Large ribosomal subunit protein uL23 from Thioalkalivibrio sulfidiphilus (strain HL-EbGR7).